Reading from the N-terminus, the 70-residue chain is NADH-ubiquinone oxidoreductase chain 3 (70 aa).

A helical membrane pass occupies residues 42–62; the sequence is FFVITLIFLIFDVEIYLLLPM.

Belongs to the complex I subunit 3 family.

The protein resides in the mitochondrion membrane. The enzyme catalyses a ubiquinone + NADH + 5 H(+)(in) = a ubiquinol + NAD(+) + 4 H(+)(out). Functionally, core subunit of the mitochondrial membrane respiratory chain NADH dehydrogenase (Complex I) that is believed to belong to the minimal assembly required for catalysis. Complex I functions in the transfer of electrons from NADH to the respiratory chain. The immediate electron acceptor for the enzyme is believed to be ubiquinone. In Artemia salina (Brine shrimp), this protein is NADH-ubiquinone oxidoreductase chain 3 (ND3).